Consider the following 393-residue polypeptide: 4-hydroxyphenylpyruvate dioxygenase (393 aa).

Thr-2 is modified (N-acetylthreonine). VOC domains are found at residues 18–149 (HFHS…LVEK) and 180–338 (IIDH…IFTK). Lys-132 carries the N6-succinyllysine modification. Residue His-183 participates in Fe cation binding. 3 positions are modified to phosphoserine: Ser-211, Ser-226, and Ser-250. His-266 and Glu-349 together coordinate Fe cation.

The protein belongs to the 4HPPD family. Homodimer. Fe cation is required as a cofactor.

It localises to the cytoplasm. The protein localises to the endoplasmic reticulum membrane. Its subcellular location is the golgi apparatus membrane. It carries out the reaction 3-(4-hydroxyphenyl)pyruvate + O2 = homogentisate + CO2. Its pathway is amino-acid degradation; L-phenylalanine degradation; acetoacetate and fumarate from L-phenylalanine: step 3/6. Its function is as follows. Catalyzes the conversion of 4-hydroxyphenylpyruvic acid to homogentisic acid, one of the steps in tyrosine catabolism. This chain is 4-hydroxyphenylpyruvate dioxygenase (Hpd), found in Mus musculus (Mouse).